The chain runs to 597 residues: Aspartate--tRNA(Asp/Asn) ligase (597 aa).

Glu175 lines the L-aspartate pocket. Residues 199 to 202 (QQYK) form an aspartate region. 2 residues coordinate L-aspartate: Arg221 and His456. 221–223 (RDE) lines the ATP pocket. Position 490 (Glu490) interacts with ATP. L-aspartate is bound at residue Arg497. 542 to 545 (GVDR) is an ATP binding site.

The protein belongs to the class-II aminoacyl-tRNA synthetase family. Type 1 subfamily. In terms of assembly, homodimer.

The protein localises to the cytoplasm. The catalysed reaction is tRNA(Asx) + L-aspartate + ATP = L-aspartyl-tRNA(Asx) + AMP + diphosphate. Its function is as follows. Aspartyl-tRNA synthetase with relaxed tRNA specificity since it is able to aspartylate not only its cognate tRNA(Asp) but also tRNA(Asn). Reaction proceeds in two steps: L-aspartate is first activated by ATP to form Asp-AMP and then transferred to the acceptor end of tRNA(Asp/Asn). The polypeptide is Aspartate--tRNA(Asp/Asn) ligase (Beijerinckia indica subsp. indica (strain ATCC 9039 / DSM 1715 / NCIMB 8712)).